A 159-amino-acid polypeptide reads, in one-letter code: Lipoprotein signal peptidase (159 aa).

A run of 2 helical transmembrane segments spans residues 64–84 and 89–109; these read SVQW…IWVV and PPFW…GNGI. Active-site residues include Asp-119 and Asp-135. The helical transmembrane segment at 130-150 threads the bilayer; it reads IFNPADIAINLAVLCFLVDLW.

It belongs to the peptidase A8 family.

The protein localises to the cell inner membrane. It carries out the reaction Release of signal peptides from bacterial membrane prolipoproteins. Hydrolyzes -Xaa-Yaa-Zaa-|-(S,diacylglyceryl)Cys-, in which Xaa is hydrophobic (preferably Leu), and Yaa (Ala or Ser) and Zaa (Gly or Ala) have small, neutral side chains.. It functions in the pathway protein modification; lipoprotein biosynthesis (signal peptide cleavage). This protein specifically catalyzes the removal of signal peptides from prolipoproteins. In Parasynechococcus marenigrum (strain WH8102), this protein is Lipoprotein signal peptidase.